Here is a 762-residue protein sequence, read N- to C-terminus: 5-methyltetrahydropteroyltriglutamate--homocysteine methyltransferase (762 aa).

Residues 17–20 and lysine 111 each bind 5-methyltetrahydropteroyltri-L-glutamate; that span reads REWK. Residues 435–437 and glutamate 488 each bind L-homocysteine; that span reads IGS. Residues 435-437 and glutamate 488 each bind L-methionine; that span reads IGS. 5-methyltetrahydropteroyltri-L-glutamate contacts are provided by residues 519–520 and tryptophan 565; that span reads RC. Aspartate 603 is a binding site for L-homocysteine. Residue aspartate 603 participates in L-methionine binding. Glutamate 609 contacts 5-methyltetrahydropteroyltri-L-glutamate. Zn(2+) is bound by residues histidine 645, cysteine 647, and glutamate 669. The active-site Proton donor is histidine 698. Residue cysteine 730 participates in Zn(2+) binding.

It belongs to the vitamin-B12 independent methionine synthase family. It depends on Zn(2+) as a cofactor.

The catalysed reaction is 5-methyltetrahydropteroyltri-L-glutamate + L-homocysteine = tetrahydropteroyltri-L-glutamate + L-methionine. The protein operates within amino-acid biosynthesis; L-methionine biosynthesis via de novo pathway; L-methionine from L-homocysteine (MetE route): step 1/1. Functionally, catalyzes the transfer of a methyl group from 5-methyltetrahydrofolate to homocysteine resulting in methionine formation. This Bacillus cereus (strain ATCC 14579 / DSM 31 / CCUG 7414 / JCM 2152 / NBRC 15305 / NCIMB 9373 / NCTC 2599 / NRRL B-3711) protein is 5-methyltetrahydropteroyltriglutamate--homocysteine methyltransferase.